We begin with the raw amino-acid sequence, 228 residues long: 2,3-bisphosphoglycerate-dependent phosphoglycerate mutase (228 aa).

Substrate is bound by residues 8–15 (RHGQSVWN), 21–22 (TG), Arg-60, 87–90 (ERHY), Lys-98, 114–115 (RR), and 183–184 (GN). Catalysis depends on His-9, which acts as the Tele-phosphohistidine intermediate. Glu-87 serves as the catalytic Proton donor/acceptor.

Belongs to the phosphoglycerate mutase family. BPG-dependent PGAM subfamily.

It catalyses the reaction (2R)-2-phosphoglycerate = (2R)-3-phosphoglycerate. It participates in carbohydrate degradation; glycolysis; pyruvate from D-glyceraldehyde 3-phosphate: step 3/5. In terms of biological role, catalyzes the interconversion of 2-phosphoglycerate and 3-phosphoglycerate. In Staphylococcus saprophyticus subsp. saprophyticus (strain ATCC 15305 / DSM 20229 / NCIMB 8711 / NCTC 7292 / S-41), this protein is 2,3-bisphosphoglycerate-dependent phosphoglycerate mutase.